We begin with the raw amino-acid sequence, 239 residues long: Orotidine 5'-phosphate decarboxylase (239 aa).

Substrate-binding positions include D10, K32, D59 to T68, T122, R184, Q193, G213, and R214. Residue K61 is the Proton donor of the active site.

Belongs to the OMP decarboxylase family. Type 1 subfamily. In terms of assembly, homodimer.

It carries out the reaction orotidine 5'-phosphate + H(+) = UMP + CO2. Its pathway is pyrimidine metabolism; UMP biosynthesis via de novo pathway; UMP from orotate: step 2/2. In terms of biological role, catalyzes the decarboxylation of orotidine 5'-monophosphate (OMP) to uridine 5'-monophosphate (UMP). The protein is Orotidine 5'-phosphate decarboxylase of Shouchella clausii (strain KSM-K16) (Alkalihalobacillus clausii).